Reading from the N-terminus, the 288-residue chain is ATP phosphoribosyltransferase (288 aa).

This sequence belongs to the ATP phosphoribosyltransferase family. Long subfamily. The cofactor is Mg(2+).

It is found in the cytoplasm. The catalysed reaction is 1-(5-phospho-beta-D-ribosyl)-ATP + diphosphate = 5-phospho-alpha-D-ribose 1-diphosphate + ATP. It participates in amino-acid biosynthesis; L-histidine biosynthesis; L-histidine from 5-phospho-alpha-D-ribose 1-diphosphate: step 1/9. Its activity is regulated as follows. Feedback inhibited by histidine. In terms of biological role, catalyzes the condensation of ATP and 5-phosphoribose 1-diphosphate to form N'-(5'-phosphoribosyl)-ATP (PR-ATP). Has a crucial role in the pathway because the rate of histidine biosynthesis seems to be controlled primarily by regulation of HisG enzymatic activity. This is ATP phosphoribosyltransferase (hisG) from Methanocaldococcus jannaschii (strain ATCC 43067 / DSM 2661 / JAL-1 / JCM 10045 / NBRC 100440) (Methanococcus jannaschii).